Reading from the N-terminus, the 150-residue chain is UPF0756 membrane protein STH2648 (150 aa).

A run of 4 helical transmembrane segments spans residues 13–33 (ALGV…VLIL), 52–72 (AGLI…EVGW), 85–105 (LAAI…VTLL), and 111–131 (VIVG…GIPV).

Belongs to the UPF0756 family.

It localises to the cell membrane. This is UPF0756 membrane protein STH2648 from Symbiobacterium thermophilum (strain DSM 24528 / JCM 14929 / IAM 14863 / T).